A 363-amino-acid chain; its full sequence is MKVLAAMSGGVDSSVAAARMVDAGHDVVGVHLALSTAPGALRTGSRGCCSKEDASDARRVADVLGIPFYVWDFAERFKEDVIDDFVSSYARGETPNPCIRCNQRIKFSALYAKALALGFDVVVTGHYARLSEGRLRRAVDQDKDQSYVLAVLTAEQLRHAMFPIGDTPKPQIREEASRRGLAVADKPDSHDICFIPSGNTQTFLGERIGVRRGTVVDAAGAVLATHDGVHGFTIGQRKGLGIPGPGPDGRPRYVTAIDAETGTVRVGDVADLQVHALTGRAPIFTAGTAPTGPLECAVQVRAHGETTSAVAELVGDELSVRLHSPLRGVARGQTLVLYRPDPDGDEVLGSATITATSACSPVS.

Residues 6–13 (AMSGGVDS) and Leu32 each bind ATP. The active-site Nucleophile is Cys101. Cys101 and Cys193 form a disulfide bridge. Gly125 contacts ATP. The interaction with tRNA stretch occupies residues 143–145 (KDQ). Catalysis depends on Cys193, which acts as the Cysteine persulfide intermediate.

The protein belongs to the MnmA/TRMU family.

It localises to the cytoplasm. It carries out the reaction S-sulfanyl-L-cysteinyl-[protein] + uridine(34) in tRNA + AH2 + ATP = 2-thiouridine(34) in tRNA + L-cysteinyl-[protein] + A + AMP + diphosphate + H(+). In terms of biological role, catalyzes the 2-thiolation of uridine at the wobble position (U34) of tRNA, leading to the formation of s(2)U34. In Mycobacterium marinum (strain ATCC BAA-535 / M), this protein is tRNA-specific 2-thiouridylase MnmA.